The chain runs to 85 residues: Homeobox protein knotted-1-like 8 (85 aa).

Positions 1–21 (ELKHQLLRKYGGYLGGLRQEF) constitute an ELK domain. A DNA-binding region (homeobox; TALE-type) is located at residues 22–85 (SKRKKKGKLP…NQRKRHWKPA (64 aa)).

This sequence belongs to the TALE/KNOX homeobox family. Strongly expressed in ear inflorescence primordia and shoot meristem. Weakly expressed in embryos. Absent from leaves.

Its subcellular location is the nucleus. In terms of biological role, probably binds to the DNA sequence 5'-TGAC-3'. This Zea mays (Maize) protein is Homeobox protein knotted-1-like 8 (KNOX8).